A 44-amino-acid polypeptide reads, in one-letter code: Thymosin beta-4 (44 aa).

Over residues methionine 1–glutamate 25 the composition is skewed to basic and acidic residues. Positions methionine 1 to serine 44 are disordered. Serine 2 bears the N-acetylserine mark. Position 2 is a phosphoserine (serine 2). At lysine 4 the chain carries N6-acetyllysine. Position 12 is an N6-acetyllysine; alternate (lysine 12). Lysine 12 is covalently cross-linked (Glycyl lysine isopeptide (Lys-Gly) (interchain with G-Cter in SUMO2); alternate). Threonine 23 carries the phosphothreonine modification. At lysine 26 the chain carries N6-acetyllysine. Phosphoserine is present on serine 31. Lysine 32 is subject to N6-acetyllysine. The span at glutamate 33–serine 44 shows a compositional bias: basic and acidic residues. Threonine 34 carries the post-translational modification Phosphothreonine. Lysine 39 is subject to N6-acetyllysine.

It belongs to the thymosin beta family. In terms of assembly, identified in a complex composed of ACTA1, COBL, GSN AND TMSB4X. Interacts with SERPINB1. Post-translationally, acSDKP is inactivated by ACE, which removes the dipeptide Lys-Pro from its C-terminus.

Its subcellular location is the cytoplasm. The protein localises to the cytoskeleton. Its function is as follows. Plays an important role in the organization of the cytoskeleton. Binds to and sequesters actin monomers (G actin) and therefore inhibits actin polymerization. Potent inhibitor of bone marrow derived stem cell differentiation. Acts by inhibits the entry of hematopoietic pluripotent stem cells into the S-phase. The protein is Thymosin beta-4 (TMSB4) of Bos taurus (Bovine).